Consider the following 785-residue polypeptide: Phenylalanine--tRNA ligase beta subunit (785 aa).

Residues 39–147 (FPIPRGVVFA…DALPPGTPLS (109 aa)) enclose the tRNA-binding domain. The 76-residue stretch at 399-474 (KPPEAIPFRP…RIQGYETIPL (76 aa)) folds into the B5 domain. Positions 452, 458, 461, and 462 each coordinate Mg(2+). Positions 688 to 780 (SRHPAAFRDL…ALRARGFGLR (93 aa)) constitute an FDX-ACB domain.

Belongs to the phenylalanyl-tRNA synthetase beta subunit family. Type 1 subfamily. Tetramer of two alpha and two beta subunits. Mg(2+) is required as a cofactor.

The protein localises to the cytoplasm. It carries out the reaction tRNA(Phe) + L-phenylalanine + ATP = L-phenylalanyl-tRNA(Phe) + AMP + diphosphate + H(+). The chain is Phenylalanine--tRNA ligase beta subunit (pheT) from Thermus thermophilus (strain ATCC 27634 / DSM 579 / HB8).